Here is a 309-residue protein sequence, read N- to C-terminus: Curved DNA-binding protein (309 aa).

Residues 5–69 (DYYAILGVKP…ERRAEYDQLR (65 aa)) form the J domain.

It is found in the cytoplasm. The protein resides in the nucleoid. Its function is as follows. DNA-binding protein that preferentially recognizes a curved DNA sequence. It is probably a functional analog of DnaJ; displays overlapping activities with DnaJ, but functions under different conditions, probably acting as a molecular chaperone in an adaptive response to environmental stresses other than heat shock. Lacks autonomous chaperone activity; binds native substrates and targets them for recognition by DnaK. Its activity is inhibited by the binding of CbpM. This chain is Curved DNA-binding protein, found in Serratia proteamaculans (strain 568).